The primary structure comprises 278 residues: Probable esterase TOX9 (278 aa).

Active-site charge relay system residues include Ser-119, Asp-222, and His-250.

It belongs to the LovG family.

Its pathway is mycotoxin biosynthesis. Probable esterase; part of the Tox1A locus, one of the 2 loci that mediate the biosynthesis of T-toxin, a family of linear polyketides 37 to 45 carbons in length, of which the major component is 41 carbons, and which leads to high virulence to maize. One of the PKSs (PKS1 or PKS2) could synthesize a precursor, used subsequently by the other PKS as starter unit, to add additional carbons. Variability in the length of the final carbon backbone C35-47 could be achieved by varying the number of condensation cycles, or use of different starter or extender units or might be due to decarboxylation of the penultimate product, catalyzed by DEC1. Additional proteins are required for the biosynthesis of T-toxin, including oxidoreductases RED1, RED2, RED3, LAM1 and OXI1, as well as esterase TOX9. This is Probable esterase TOX9 from Cochliobolus heterostrophus (strain C4 / ATCC 48331 / race T) (Southern corn leaf blight fungus).